The chain runs to 309 residues: Succinate--CoA ligase [ADP-forming] subunit alpha-2, mitochondrial (309 aa).

The N-terminal 9 residues, 1-9 (MLSSSFERN), are a transit peptide targeting the hydrogenosome. CoA contacts are provided by residues Lys54 and 107–109 (ITE). Tyr171 contacts substrate. The active-site Tele-phosphohistidine intermediate is His262.

Belongs to the succinate/malate CoA ligase alpha subunit family. In terms of assembly, heterodimer of an alpha and a beta subunit.

It is found in the hydrogenosome lumen. It catalyses the reaction succinate + ATP + CoA = succinyl-CoA + ADP + phosphate. It functions in the pathway carbohydrate metabolism; tricarboxylic acid cycle; succinate from succinyl-CoA (ligase route): step 1/1. Functionally, succinyl-CoA synthetase functions in the citric acid cycle (TCA), coupling the hydrolysis of succinyl-CoA to the synthesis of ATP and thus represents the only step of substrate-level phosphorylation in the TCA. The alpha subunit of the enzyme binds the substrates coenzyme A and phosphate, while succinate binding and nucleotide specificity is provided by the beta subunit. In Trichomonas vaginalis, this protein is Succinate--CoA ligase [ADP-forming] subunit alpha-2, mitochondrial (ALPHA-SCS2).